The primary structure comprises 126 residues: Histone H2B type 1-K (126 aa).

A compositionally biased stretch (low complexity) spans 1-12; the sequence is MPEPAKSAPAPK. Positions 1–36 are disordered; that stretch reads MPEPAKSAPAPKKGSKKAVTKAQKKDGKKRKRSRKE. N-acetylproline is present on Pro-2. An ADP-ribosyl glutamic acid modification is found at Glu-3. Residue Lys-6 is modified to N6-(2-hydroxyisobutyryl)lysine; alternate. Residue Lys-6 is modified to N6-(beta-hydroxybutyryl)lysine; alternate. At Lys-6 the chain carries N6-acetyllysine; alternate. Lys-6 carries the N6-butyryllysine; alternate modification. The residue at position 6 (Lys-6) is an N6-crotonyllysine; alternate. Lys-6 is modified (N6-lactoyllysine; alternate). Lys-6 is covalently cross-linked (Glycyl lysine isopeptide (Lys-Gly) (interchain with G-Cter in SUMO2); alternate). Ser-7 carries the post-translational modification ADP-ribosylserine. Lys-12 is modified (N6-(beta-hydroxybutyryl)lysine; alternate). 2 positions are modified to N6-acetyllysine; alternate: Lys-12 and Lys-13. N6-crotonyllysine; alternate occurs at positions 12 and 13. Residue Lys-12 is modified to N6-lactoyllysine; alternate. An N6-(2-hydroxyisobutyryl)lysine; alternate modification is found at Lys-13. Ser-15 carries the post-translational modification Phosphoserine; by STK4/MST1. N6-acetyllysine; alternate is present on residues Lys-16, Lys-17, Lys-21, and Lys-24. Residues Lys-16, Lys-17, Lys-21, and Lys-24 each carry the N6-crotonyllysine; alternate modification. An N6-lactoyllysine; alternate mark is found at Lys-16, Lys-17, Lys-21, and Lys-24. Lys-17 is subject to N6-glutaryllysine; alternate. Lys-21 and Lys-24 each carry N6-(2-hydroxyisobutyryl)lysine; alternate. Residue Lys-21 is modified to N6-(beta-hydroxybutyryl)lysine; alternate. Position 21 is an N6-butyryllysine; alternate (Lys-21). A Glycyl lysine isopeptide (Lys-Gly) (interchain with G-Cter in SUMO2); alternate cross-link involves residue Lys-21. Lys-25 is modified (N6-(2-hydroxyisobutyryl)lysine). Lys-35 carries the post-translational modification N6-(2-hydroxyisobutyryl)lysine; alternate. Lys-35 is subject to N6-(beta-hydroxybutyryl)lysine; alternate. Position 35 is an N6-crotonyllysine; alternate (Lys-35). Lys-35 is modified (N6-glutaryllysine; alternate). Position 35 is an N6-succinyllysine; alternate (Lys-35). Residue Lys-35 forms a Glycyl lysine isopeptide (Lys-Gly) (interchain with G-Cter in ubiquitin); alternate linkage. Glu-36 bears the PolyADP-ribosyl glutamic acid mark. Ser-37 is subject to Phosphoserine; by AMPK. Lys-44, Lys-47, and Lys-58 each carry N6-(2-hydroxyisobutyryl)lysine; alternate. At Lys-44 the chain carries N6-lactoyllysine; alternate. N6-glutaryllysine; alternate occurs at positions 44 and 47. Lys-47 is subject to N6-methyllysine; alternate. Lys-58 carries the post-translational modification N6,N6-dimethyllysine; alternate. The residue at position 80 (Arg-80) is a Dimethylated arginine. Lys-86 bears the N6-(2-hydroxyisobutyryl)lysine; alternate mark. Lys-86 carries the post-translational modification N6-acetyllysine; alternate. Lys-86 carries the post-translational modification N6-lactoyllysine; alternate. Lys-86 carries the post-translational modification N6,N6,N6-trimethyllysine; alternate. Omega-N-methylarginine is present on residues Arg-87 and Arg-93. Lys-109 is subject to N6-(2-hydroxyisobutyryl)lysine; alternate. Position 109 is an N6-lactoyllysine; alternate (Lys-109). Lys-109 bears the N6-glutaryllysine; alternate mark. Residue Lys-109 is modified to N6-methyllysine; alternate. O-linked (GlcNAc) serine glycosylation occurs at Ser-113. Position 116 is a phosphothreonine (Thr-116). Lys-117 and Lys-121 each carry N6-(2-hydroxyisobutyryl)lysine; alternate. Lys-117 is subject to N6-(beta-hydroxybutyryl)lysine; alternate. N6-lactoyllysine; alternate is present on residues Lys-117 and Lys-121. An N6-glutaryllysine; alternate mark is found at Lys-117 and Lys-121. Lys-117 and Lys-121 each carry N6-succinyllysine; alternate. Lys-117 bears the N6-methylated lysine; alternate mark. Lys-121 is covalently cross-linked (Glycyl lysine isopeptide (Lys-Gly) (interchain with G-Cter in ubiquitin); alternate).

Belongs to the histone H2B family. In terms of assembly, the nucleosome is a histone octamer containing two molecules each of H2A, H2B, H3 and H4 assembled in one H3-H4 heterotetramer and two H2A-H2B heterodimers. The octamer wraps approximately 147 bp of DNA. In terms of processing, monoubiquitination at Lys-35 (H2BK34Ub) by the MSL1/MSL2 dimer is required for histone H3 'Lys-4' (H3K4me) and 'Lys-79' (H3K79me) methylation and transcription activation at specific gene loci, such as HOXA9 and MEIS1 loci. Similarly, monoubiquitination at Lys-121 (H2BK120Ub) by the RNF20/40 complex gives a specific tag for epigenetic transcriptional activation and is also prerequisite for histone H3 'Lys-4' and 'Lys-79' methylation. It also functions cooperatively with the FACT dimer to stimulate elongation by RNA polymerase II. H2BK120Ub also acts as a regulator of mRNA splicing: deubiquitination by USP49 is required for efficient cotranscriptional splicing of a large set of exons. Phosphorylated on Ser-15 (H2BS14ph) by STK4/MST1 during apoptosis; which facilitates apoptotic chromatin condensation. Also phosphorylated on Ser-15 in response to DNA double strand breaks (DSBs), and in correlation with somatic hypermutation and immunoglobulin class-switch recombination. Phosphorylation at Ser-37 (H2BS36ph) by AMPK in response to stress promotes transcription. Post-translationally, glcNAcylation at Ser-113 promotes monoubiquitination of Lys-121. It fluctuates in response to extracellular glucose, and associates with transcribed genes. In terms of processing, ADP-ribosylated by PARP1 or PARP2 on Ser-7 (H2BS6ADPr) in response to DNA damage. H2BS6ADPr promotes recruitment of CHD1L. Mono-ADP-ribosylated on Glu-3 (H2BE2ADPr) by PARP3 in response to single-strand breaks. Poly ADP-ribosylation on Glu-36 (H2BE35ADPr) by PARP1 regulates adipogenesis: it inhibits phosphorylation at Ser-37 (H2BS36ph), thereby blocking expression of pro-adipogenetic genes. Crotonylation (Kcr) is specifically present in male germ cells and marks testis-specific genes in post-meiotic cells, including X-linked genes that escape sex chromosome inactivation in haploid cells. Crotonylation marks active promoters and enhancers and confers resistance to transcriptional repressors. It is also associated with post-meiotically activated genes on autosomes. Post-translationally, lactylated in macrophages by EP300/P300 by using lactoyl-CoA directly derived from endogenous or exogenous lactate, leading to stimulates gene transcription.

It localises to the nucleus. The protein resides in the chromosome. Functionally, core component of nucleosome. Nucleosomes wrap and compact DNA into chromatin, limiting DNA accessibility to the cellular machineries which require DNA as a template. Histones thereby play a central role in transcription regulation, DNA repair, DNA replication and chromosomal stability. DNA accessibility is regulated via a complex set of post-translational modifications of histones, also called histone code, and nucleosome remodeling. This chain is Histone H2B type 1-K, found in Macaca fascicularis (Crab-eating macaque).